A 161-amino-acid chain; its full sequence is Large ribosomal subunit protein uL10 (161 aa).

This sequence belongs to the universal ribosomal protein uL10 family. In terms of assembly, part of the ribosomal stalk of the 50S ribosomal subunit. The N-terminus interacts with L11 and the large rRNA to form the base of the stalk. The C-terminus forms an elongated spine to which L12 dimers bind in a sequential fashion forming a multimeric L10(L12)X complex.

Functionally, forms part of the ribosomal stalk, playing a central role in the interaction of the ribosome with GTP-bound translation factors. The chain is Large ribosomal subunit protein uL10 from Malacoplasma penetrans (strain HF-2) (Mycoplasma penetrans).